The chain runs to 327 residues: Spermidine/putrescine import ATP-binding protein PotA (327 aa).

Residues 5–235 (IKVEAVEKHF…PKTLFVATFI (231 aa)) form the ABC transporter domain. 37–44 (GPSGCGKT) provides a ligand contact to ATP.

The protein belongs to the ABC transporter superfamily. Spermidine/putrescine importer (TC 3.A.1.11.1) family. The complex is composed of two ATP-binding proteins (PotA), two transmembrane proteins (PotB and PotC) and a solute-binding protein (PotD).

The protein localises to the cell membrane. It carries out the reaction ATP + H2O + polyamine-[polyamine-binding protein]Side 1 = ADP + phosphate + polyamineSide 2 + [polyamine-binding protein]Side 1.. Its function is as follows. Part of the ABC transporter complex PotABCD involved in spermidine/putrescine import. Responsible for energy coupling to the transport system. This chain is Spermidine/putrescine import ATP-binding protein PotA, found in Bacillus thuringiensis subsp. konkukian (strain 97-27).